A 527-amino-acid polypeptide reads, in one-letter code: UDP-glucuronosyltransferase 2A1 (527 aa).

A signal peptide spans 1-20 (MLKNILLWSLQLSLLGMSLG). Topologically, residues 21-490 (GNVLIWPMEG…LSWFQYHSLD (470 aa)) are extracellular. N-linked (GlcNAc...) asparagine glycosylation occurs at asparagine 49. An N6-succinyllysine modification is found at lysine 134. An N-linked (GlcNAc...) asparagine glycan is attached at asparagine 313. A helical transmembrane segment spans residues 491–507 (VIGFLLACMASAILLVI). Residues 508-527 (KCCLFVFQKIGKTXKKNKRD) lie on the Cytoplasmic side of the membrane.

Belongs to the UDP-glycosyltransferase family. In terms of tissue distribution, olfactory epithelium. Mainly found in the sustentacular cells and to a lesser extent in Bowman's gland cells. Also expressed in the olfactory sensory neuron nuclei. Neuronal localization within the olfactory bulb is mainly found in the deeper granular cells.

The protein resides in the membrane. It catalyses the reaction glucuronate acceptor + UDP-alpha-D-glucuronate = acceptor beta-D-glucuronoside + UDP + H(+). The enzyme catalyses 16beta,17beta-estriol + UDP-alpha-D-glucuronate = 16beta,17beta-estriol 16-O-(beta-D-glucuronate) + UDP + H(+). It carries out the reaction 16alpha,17alpha-estriol + UDP-alpha-D-glucuronate = 16alpha,17alpha-estriol 16-O-(beta-D-glucuronate) + UDP + H(+). The catalysed reaction is 17alpha-estradiol + UDP-alpha-D-glucuronate = 17alpha-estradiol 17-O-(beta-D-glucuronate) + UDP + H(+). It catalyses the reaction 17alpha-estradiol + UDP-alpha-D-glucuronate = 17alpha-estradiol 3-O-(beta-D-glucuronate) + UDP + H(+). The enzyme catalyses 17beta-estradiol + UDP-alpha-D-glucuronate = 17beta-estradiol 3-O-(beta-D-glucuronate) + UDP + H(+). It carries out the reaction 17beta-estradiol + UDP-alpha-D-glucuronate = 17beta-estradiol 17-O-(beta-D-glucuronate) + UDP + H(+). The catalysed reaction is testosterone + UDP-alpha-D-glucuronate = testosterone 17-O-(beta-D-glucuronate) + UDP + H(+). It catalyses the reaction epitestosterone + UDP-alpha-D-glucuronate = epitestosterone 17-O-(beta-D-glucuronate) + UDP + H(+). The enzyme catalyses lithocholate + UDP-alpha-D-glucuronate = lithocholoyl-3-O-(beta-D-glucuronate) + UDP + H(+). It carries out the reaction lithocholate + UDP-alpha-D-glucuronate = lithocholoyl-24-O-(beta-D-glucuronate) + UDP. The catalysed reaction is deoxycholate + UDP-alpha-D-glucuronate = deoxycholoyl-24-O-(beta-D-glucuronate) + UDP. It catalyses the reaction hyodeoxycholate + UDP-alpha-D-glucuronate = hyodeoxycholate 6-O-(beta-D-glucuronate) + UDP + H(+). The enzyme catalyses hyocholate + UDP-alpha-D-glucuronate = hyocholoyl-24-O-(beta-D-glucuronate) + UDP. UDP-glucuronosyltransferase (UGT) that catalyzes phase II biotransformation reactions in which lipophilic substrates are conjugated with glucuronic acid to increase the metabolite's water solubility, thereby facilitating excretion into either the urine or bile. Essential for the elimination and detoxification of drugs, xenobiotics and endogenous compounds. Catalyzes the glucuronidation of endogenous steroid hormones such as androgens (testosterones) and estrogens (estradiol and estriol). Contributes to bile acid (BA) detoxification by catalyzing the glucuronidation of BA substrates, which are natural detergents for dietary lipids absorption. Shows a high affinity to aliphatic odorants such as citronellol as well as olfactory tissue specificity, and therefore may be involved in olfaction. The sequence is that of UDP-glucuronosyltransferase 2A1 from Rattus norvegicus (Rat).